Consider the following 467-residue polypeptide: 6-phosphogluconate dehydrogenase, decarboxylating (467 aa).

NADP(+)-binding positions include 9–14 (GLGVMG), 32–34 (NYT), 73–75 (VTA), and Asn-101. Substrate-binding positions include Asn-101 and 127–129 (SGG). Residue Lys-181 is the Proton acceptor of the active site. 184-185 (HN) lines the substrate pocket. The active-site Proton donor is the Glu-188. Tyr-189, Lys-259, Arg-286, and His-451 together coordinate substrate.

This sequence belongs to the 6-phosphogluconate dehydrogenase family. Homodimer.

It catalyses the reaction 6-phospho-D-gluconate + NADP(+) = D-ribulose 5-phosphate + CO2 + NADPH. It functions in the pathway carbohydrate degradation; pentose phosphate pathway; D-ribulose 5-phosphate from D-glucose 6-phosphate (oxidative stage): step 3/3. Functionally, catalyzes the oxidative decarboxylation of 6-phosphogluconate to ribulose 5-phosphate and CO(2), with concomitant reduction of NADP to NADPH. The protein is 6-phosphogluconate dehydrogenase, decarboxylating (gntZ) of Bacillus licheniformis.